Here is an 80-residue protein sequence, read N- to C-terminus: Serine protease inhibitor Kazal-type 6 (80 aa).

The N-terminal stretch at 1–23 (MKTSGVFLLLSLALFCFFSGVFG) is a signal peptide. Glutamine 24 bears the Pyrrolidone carboxylic acid mark. Residues 24–80 (QGAQVDCAEFKDPKVYCTRESNPHCGSDGQTYGNKCAFCKAVMKSGGKINLKHRGKC) form the Kazal-like domain. 3 disulfides stabilise this stretch: cysteine 30–cysteine 62, cysteine 40–cysteine 59, and cysteine 48–cysteine 80.

Seminal plasma.

It is found in the secreted. Serine protease inhibitor selective for kallikreins. Efficiently inhibits KLK4, KLK5, KLK6, KLK7, KLK12, KLK13 and KLK14. Doesn't inhibit KLK8. Inhibits acrosin, trypsin, and chymotrypsin. The chain is Serine protease inhibitor Kazal-type 6 (SPINK6) from Bos taurus (Bovine).